The following is a 235-amino-acid chain: Large ribosomal subunit protein uL1 (235 aa).

The protein belongs to the universal ribosomal protein uL1 family. Part of the 50S ribosomal subunit.

In terms of biological role, binds directly to 23S rRNA. The L1 stalk is quite mobile in the ribosome, and is involved in E site tRNA release. Its function is as follows. Protein L1 is also a translational repressor protein, it controls the translation of the L11 operon by binding to its mRNA. The polypeptide is Large ribosomal subunit protein uL1 (Corynebacterium diphtheriae (strain ATCC 700971 / NCTC 13129 / Biotype gravis)).